A 324-amino-acid chain; its full sequence is MLGPAYNHTMETPASFLLVGIPGLQSSHLWLAISLSAMYITALLGNTLIVTAIWMDSTRHEPMYCFLCVLAAVDIVMASSVVPKMVSIFCSGDSSISFSACFTQMFFVHLATAVETGLLLTMAFDRYVAICKPLHYKRILTPQVMLGMSMAVTIRAVTFMTPLSWMMNHLPFCGSNVVVHSYCKHIALARLACADPVPSSLYSLIGSSLMVGSDVAFIAASYILILRAVFDLSSKTAQLKALSTCGSHVGVMALYYLPGMASIYAAWLGQDIVPLHTQVLLADLYVIIPATLNPIIYGMRTKQLLEGIWSYLMHFLFDHSNLGS.

Residues 1-29 (MLGPAYNHTMETPASFLLVGIPGLQSSHL) lie on the Extracellular side of the membrane. N-linked (GlcNAc...) asparagine glycosylation is present at N7. Residues 30-50 (WLAISLSAMYITALLGNTLIV) traverse the membrane as a helical segment. The Cytoplasmic portion of the chain corresponds to 51–58 (TAIWMDST). The helical transmembrane segment at 59 to 79 (RHEPMYCFLCVLAAVDIVMAS) threads the bilayer. Over 80–103 (SVVPKMVSIFCSGDSSISFSACFT) the chain is Extracellular. A disulfide bridge links C101 with C193. The chain crosses the membrane as a helical span at residues 104 to 124 (QMFFVHLATAVETGLLLTMAF). The Cytoplasmic portion of the chain corresponds to 125–143 (DRYVAICKPLHYKRILTPQ). Residues 144–164 (VMLGMSMAVTIRAVTFMTPLS) traverse the membrane as a helical segment. Residues 165–200 (WMMNHLPFCGSNVVVHSYCKHIALARLACADPVPSS) are Extracellular-facing. Residues 201–221 (LYSLIGSSLMVGSDVAFIAAS) form a helical membrane-spanning segment. Residues 222–241 (YILILRAVFDLSSKTAQLKA) lie on the Cytoplasmic side of the membrane. Residues 242 to 262 (LSTCGSHVGVMALYYLPGMAS) traverse the membrane as a helical segment. The Extracellular portion of the chain corresponds to 263–278 (IYAAWLGQDIVPLHTQ). Residues 279–299 (VLLADLYVIIPATLNPIIYGM) traverse the membrane as a helical segment. Residues 300 to 324 (RTKQLLEGIWSYLMHFLFDHSNLGS) are Cytoplasmic-facing.

It belongs to the G-protein coupled receptor 1 family.

It is found in the cell membrane. Its function is as follows. Odorant receptor. The chain is Olfactory receptor 52I1 (OR52I1) from Homo sapiens (Human).